Reading from the N-terminus, the 1327-residue chain is Polarized growth protein L1 (1327 aa).

A signal peptide spans 1–30; that stretch reads MRESFASLLATGAGKLALSLLFAATPFTSA. Over 31 to 1169 the chain is Extracellular; that stretch reads YTFNQVPSPN…FSQQNGKHLA (1139 aa). N-linked (GlcNAc...) asparagine glycosylation is found at asparagine 74, asparagine 90, asparagine 105, asparagine 115, asparagine 132, asparagine 170, asparagine 217, asparagine 224, asparagine 235, asparagine 318, asparagine 342, asparagine 452, asparagine 475, asparagine 601, asparagine 639, asparagine 648, and asparagine 691. The stretch at 595–641 is one Kelch 1 repeat; that stretch reads NLYVAGNFSNNDGRNNIFSFKQGASDPTALPNRGLNRQVMTLYQNDS. One copy of the Kelch 2 repeat lies at 699–754; sequence QVLAVSGFFDSVNEFNGNPSTNVQDFAVWVPSRSNWLHNLDFFTLAMSGRLMTFAD. 4 N-linked (GlcNAc...) asparagine glycosylation sites follow: asparagine 835, asparagine 852, asparagine 877, and asparagine 931. Kelch repeat units lie at residues 945-993 and 994-1040; these read DVFV…ISDT and QMYI…TIAN. Residues asparagine 1000, asparagine 1006, and asparagine 1126 are each glycosylated (N-linked (GlcNAc...) asparagine). A helical membrane pass occupies residues 1170–1190; sequence LWAIVLIGLAIALVLTFLLVV. The Cytoplasmic portion of the chain corresponds to 1191–1327; the sequence is AGILLEWYRN…VFDTILACSS (137 aa).

This sequence belongs to the RAX2 family.

The protein resides in the cell membrane. Has been identified within the cluster that mediates the biosynthesis of squalestatin, but as its expression does not follow that of the other cluster members and it is not conserved in close related clusters, L1 seems not to be involved in the biosynthesis of squalestatin. Probably plays a role as a cell polarity regulator. This chain is Polarized growth protein L1, found in Phoma sp. (strain ATCC 20986 / MF5453).